Here is a 114-residue protein sequence, read N- to C-terminus: T cell receptor beta variable 4-2 (114 aa).

A signal peptide spans 1–21; the sequence is MGCRLLCCAVLCLLGAVPMET. Residues 22–114 enclose the Ig-like domain; it reads GVTQTPRHLV…SALYLCASSQ (93 aa). C42 and C110 form a disulfide bridge. Residues N76 and N89 are each glycosylated (N-linked (GlcNAc...) asparagine).

Alpha-beta TR is a heterodimer composed of an alpha and beta chain; disulfide-linked. The alpha-beta TR is associated with the transmembrane signaling CD3 coreceptor proteins to form the TR-CD3 (TcR or TCR). The assembly of alpha-beta TR heterodimers with CD3 occurs in the endoplasmic reticulum where a single alpha-beta TR heterodimer associates with one CD3D-CD3E heterodimer, one CD3G-CD3E heterodimer and one CD247 homodimer forming a stable octameric structure. CD3D-CD3E and CD3G-CD3E heterodimers preferentially associate with TR alpha and TR beta chains, respectively. The association of the CD247 homodimer is the last step of TcR assembly in the endoplasmic reticulum and is required for transport to the cell surface.

Its subcellular location is the cell membrane. In terms of biological role, v region of the variable domain of T cell receptor (TR) beta chain that participates in the antigen recognition. Alpha-beta T cell receptors are antigen specific receptors which are essential to the immune response and are present on the cell surface of T lymphocytes. Recognize peptide-major histocompatibility (MH) (pMH) complexes that are displayed by antigen presenting cells (APC), a prerequisite for efficient T cell adaptive immunity against pathogens. Binding of alpha-beta TR to pMH complex initiates TR-CD3 clustering on the cell surface and intracellular activation of LCK that phosphorylates the ITAM motifs of CD3G, CD3D, CD3E and CD247 enabling the recruitment of ZAP70. In turn ZAP70 phosphorylates LAT, which recruits numerous signaling molecules to form the LAT signalosome. The LAT signalosome propagates signal branching to three major signaling pathways, the calcium, the mitogen-activated protein kinase (MAPK) kinase and the nuclear factor NF-kappa-B (NF-kB) pathways, leading to the mobilization of transcription factors that are critical for gene expression and essential for T cell growth and differentiation. The T cell repertoire is generated in the thymus, by V-(D)-J rearrangement. This repertoire is then shaped by intrathymic selection events to generate a peripheral T cell pool of self-MH restricted, non-autoaggressive T cells. Post-thymic interaction of alpha-beta TR with the pMH complexes shapes TR structural and functional avidity. The polypeptide is T cell receptor beta variable 4-2 (Homo sapiens (Human)).